The following is a 485-amino-acid chain: Glutamate--tRNA ligase (485 aa).

A 'HIGH' region motif is present at residues 12 to 22 (PSPTGEPHVGT). Positions 109, 111, 136, and 138 each coordinate Zn(2+). Residues 253-257 (KLSKR) carry the 'KMSKS' region motif. Lys256 contributes to the ATP binding site.

It belongs to the class-I aminoacyl-tRNA synthetase family. Glutamate--tRNA ligase type 1 subfamily. In terms of assembly, monomer. It depends on Zn(2+) as a cofactor.

Its subcellular location is the cytoplasm. The catalysed reaction is tRNA(Glu) + L-glutamate + ATP = L-glutamyl-tRNA(Glu) + AMP + diphosphate. In terms of biological role, catalyzes the attachment of glutamate to tRNA(Glu) in a two-step reaction: glutamate is first activated by ATP to form Glu-AMP and then transferred to the acceptor end of tRNA(Glu). The protein is Glutamate--tRNA ligase of Agrobacterium fabrum (strain C58 / ATCC 33970) (Agrobacterium tumefaciens (strain C58)).